A 335-amino-acid chain; its full sequence is Lipoyl synthase (335 aa).

Polar residues predominate over residues 1-13 (MTIDTNPESSTPS). Positions 1–29 (MTIDTNPESSTPSAPAYNPSEKQKGSAKT) are disordered. Cysteine 75, cysteine 80, cysteine 86, cysteine 101, cysteine 105, cysteine 108, and serine 315 together coordinate [4Fe-4S] cluster. One can recognise a Radical SAM core domain in the interval 86 to 304 (CFGKGTATFM…EEEAYKMGFA (219 aa)).

It belongs to the radical SAM superfamily. Lipoyl synthase family. [4Fe-4S] cluster serves as cofactor.

It localises to the cytoplasm. It carries out the reaction [[Fe-S] cluster scaffold protein carrying a second [4Fe-4S](2+) cluster] + N(6)-octanoyl-L-lysyl-[protein] + 2 oxidized [2Fe-2S]-[ferredoxin] + 2 S-adenosyl-L-methionine + 4 H(+) = [[Fe-S] cluster scaffold protein] + N(6)-[(R)-dihydrolipoyl]-L-lysyl-[protein] + 4 Fe(3+) + 2 hydrogen sulfide + 2 5'-deoxyadenosine + 2 L-methionine + 2 reduced [2Fe-2S]-[ferredoxin]. Its pathway is protein modification; protein lipoylation via endogenous pathway; protein N(6)-(lipoyl)lysine from octanoyl-[acyl-carrier-protein]: step 2/2. In terms of biological role, catalyzes the radical-mediated insertion of two sulfur atoms into the C-6 and C-8 positions of the octanoyl moiety bound to the lipoyl domains of lipoate-dependent enzymes, thereby converting the octanoylated domains into lipoylated derivatives. The sequence is that of Lipoyl synthase from Herminiimonas arsenicoxydans.